The primary structure comprises 303 residues: MPLSLPVISTEVRQALDAGRPVVALESTIITHGLPRPRNLAVARDAERQLRDAGVVPATIGVVAGTPTVGLTGEQIEELAADEAAVKISTRDLPVAVARGASGGTTVAATAFLARKAGIRVFATGGLGGVHHGAATTFDESADLVTLASTPLVLVSAGAKSILDLAATLERLETLNIPVVGYRTRRFPGFYVADSGHDLEHSVDTPQEVAALVEARDALELRSALLVANPIPPERQLDPELHRRVLAEAWEEAERQGISGHDSTPFLLDHIRRATGDRSLEVNIDVYQNNVALGASIARAMAG.

The active-site Proton donor is E26. Residues K87 and V107 each contribute to the substrate site. D139 provides a ligand contact to Mn(2+). 141 to 143 (SAD) is a substrate binding site. The active-site Nucleophile is the K160.

The protein belongs to the pseudouridine-5'-phosphate glycosidase family. Homotrimer. Mn(2+) serves as cofactor.

The catalysed reaction is D-ribose 5-phosphate + uracil = psi-UMP + H2O. Its function is as follows. Catalyzes the reversible cleavage of pseudouridine 5'-phosphate (PsiMP) to ribose 5-phosphate and uracil. Functions biologically in the cleavage direction, as part of a pseudouridine degradation pathway. The chain is Pseudouridine-5'-phosphate glycosidase from Saccharopolyspora erythraea (strain ATCC 11635 / DSM 40517 / JCM 4748 / NBRC 13426 / NCIMB 8594 / NRRL 2338).